The primary structure comprises 682 residues: Solute carrier organic anion transporter family member 2B1 (682 aa).

Residues 1–30 (MPDRSTKATMGAEDIHERKVSMEPRDSHQD) are disordered. Residues 1–41 (MPDRSTKATMGAEDIHERKVSMEPRDSHQDAQPRGMFQNIK) are Cytoplasmic-facing. A compositionally biased stretch (basic and acidic residues) spans 13–30 (EDIHERKVSMEPRDSHQD). S21 is subject to Phosphoserine. A helical transmembrane segment spans residues 42-61 (FFVLCHSILQLAQLMISGYL). The Extracellular portion of the chain corresponds to 62-80 (KSSISTVEKRFGLSSQTSG). Residues 81-101 (LLAAFNEVGNISLILFVSYFG) traverse the membrane as a helical segment. Residues 102-107 (SRVHRP) are Cytoplasmic-facing. Residues 108 to 132 (RMIGCGAILVAVAGLLMALPHFISE) traverse the membrane as a helical segment. The Extracellular portion of the chain corresponds to 133 to 176 (PYRYDHSSPDRSQDFEASLCLPTTMAPASALSNDSCSSRTETKH). The N-linked (GlcNAc...) asparagine glycan is linked to N165. Residues 177–206 (LTMVGIMFTAQTLLGIGGVPIQPFGISYID) traverse the membrane as a helical segment. Residues 207 to 225 (DFAHHSNSPLYLGILFAIT) are Cytoplasmic-facing. The helical transmembrane segment at 226-246 (MMGPGLAYGLGSLMLRLYVDI) threads the bilayer. Residues 247-264 (DRMPEGGINLTTKDPRWV) are Extracellular-facing. A glycan (N-linked (GlcNAc...) asparagine) is linked at N255. Residues 265-289 (GAWWLGFLISAGLVVLAASPYFFFP) form a helical membrane-spanning segment. Residues 290–354 (REMPKEKYEL…IKVFPRVLLR (65 aa)) are Cytoplasmic-facing. S311 and S314 each carry phosphoserine. A helical transmembrane segment spans residues 355-376 (TLRHPIFLLVVLSQVCTSSMVA). At 377 to 396 (GTATFLPKFLERQFSITASF) the chain is on the extracellular side. The chain crosses the membrane as a helical span at residues 397–420 (ANLLLGCLTIPLAIVGIVVGGVLV). Residues 421 to 424 (KRLH) lie on the Cytoplasmic side of the membrane. The chain crosses the membrane as a helical span at residues 425–448 (LSPMQCSALCLLGSLLCLLLSLPL). The Extracellular portion of the chain corresponds to 449-552 (FFIGCSTHHI…SACSRLVLPF (104 aa)). In terms of domain architecture, Kazal-like spans 471-531 (PSLFPGCSEP…VFYTNCSCVA (61 aa)). 3 disulfide bridges follow: C477/C508, C483/C504, and C492/C529. Residues N526 and N533 are each glycosylated (N-linked (GlcNAc...) asparagine). Residues 553–575 (ILLISLGAAVASITHTPSFMLIL) form a helical membrane-spanning segment. The Cytoplasmic portion of the chain corresponds to 576–584 (RGVKKEDKT). The helical transmembrane segment at 585–610 (LAVGMQFMLLRVLAWMPSPVIHGSAI) threads the bilayer. At 611 to 643 (DTTCVHWALTCGRRAVCRYYDHDLLRNRFIGLQ) the chain is on the extracellular side. A helical transmembrane segment spans residues 644 to 661 (FFFKSGSLVCFALVLAIL). The Cytoplasmic portion of the chain corresponds to 662–682 (RQQSREASTKATVKSSDLQEL).

This sequence belongs to the organo anion transporter (TC 2.A.60) family. In terms of tissue distribution, expressed in liver, kidney, heart, lung and retina. Widely distributed in all brain regions.

The protein localises to the cell membrane. The protein resides in the basal cell membrane. It is found in the apical cell membrane. It carries out the reaction coproporphyrin III(out) = coproporphyrin III(in). The enzyme catalyses substance P(out) = substance P(in). It catalyses the reaction taurocholate(out) = taurocholate(in). The catalysed reaction is prostaglandin E1(out) = prostaglandin E1(in). It carries out the reaction prostaglandin E2(out) = prostaglandin E2(in). The enzyme catalyses prostaglandin D2(out) = prostaglandin D2(in). It catalyses the reaction leukotriene C4(out) = leukotriene C4(in). The catalysed reaction is L-thyroxine(out) = L-thyroxine(in). Its function is as follows. Mediates the Na(+)-independent transport of organic anions such as taurocholate, the prostaglandins D2 (PGD2), E1 (PGE1) and E2 (PGE2), leukotriene C4, thromboxane B2 and L-thyroxine. Also plays a role in the reuptake of neuropeptides such as substance P/TAC1 and vasoactive intestinal peptide/VIP released from retinal neurons. May act as a heme transporter that promotes cellular iron availability. Also transports heme by-product coproporphyrin III (CPIII), and may be involved in their hepatic disposition. May contribute to regulate the transport of organic compounds in testis across the blood-testis-barrier. Shows a pH-sensitive substrate specificity which may be ascribed to the protonation state of the binding site and leads to a stimulation of substrate transport in an acidic microenvironment. The exact transport mechanism has not been yet deciphered but most likely involves an anion exchange, coupling the cellular uptake of organic substrate with the efflux of an anionic compound. Hydrogencarbonate/HCO3(-) acts as a probable counteranion that exchanges for organic anions. Cytoplasmic glutamate may also act as counteranion in the placenta. The polypeptide is Solute carrier organic anion transporter family member 2B1 (Rattus norvegicus (Rat)).